The following is a 203-amino-acid chain: Selenocysteine-containing peroxiredoxin PrxU (203 aa).

In terms of domain architecture, Thioredoxin spans 2–160; sequence VSVGKKAPDF…TLRQIQAFQL (159 aa). The active site involves Sec47. Residue Sec47 is a non-standard amino acid, selenocysteine.

The protein belongs to the peroxiredoxin family. AhpC/Prx1 subfamily.

The enzyme catalyses a hydroperoxide + [thioredoxin]-dithiol = an alcohol + [thioredoxin]-disulfide + H2O. Functionally, thiol-specific peroxidase that catalyzes the reduction of hydrogen peroxide and organic hydroperoxides to water and alcohols, respectively. Plays a role in cell protection against oxidative stress by detoxifying peroxides. The chain is Selenocysteine-containing peroxiredoxin PrxU from Peptoclostridium acidaminophilum (Eubacterium acidaminophilum).